We begin with the raw amino-acid sequence, 347 residues long: FK506-binding protein-like (347 aa).

A disordered region spans residues 1–36 (METSLISPMKENNTAQPQQREENTQQNLNAAVPIKQ). Position 3 is a phosphothreonine (threonine 3). 3 TPR repeats span residues 208–241 (AKEEHRRGTELFRAGNPQGAARCYGRALRLLLTL), 250–283 (TILHANLAACQLLLGHPQLAAQSCDRVLEREPGH), and 284–317 (LKALYRRGVAQAALGDLDKATADLKKVLAVDPKN).

In terms of assembly, forms a ternary complex with CDKN1A/p21 and HSP90AB1/Hsp90.

Functionally, may be involved in response to X-ray. Regulates p21 protein stability by binding to Hsp90 and p21. This Rattus norvegicus (Rat) protein is FK506-binding protein-like (Fkbpl).